The primary structure comprises 316 residues: tRNA-cytidine(32) 2-sulfurtransferase (316 aa).

A PP-loop motif motif is present at residues 45 to 50 (SGGKDS). Cys-120, Cys-123, and Cys-211 together coordinate [4Fe-4S] cluster.

Belongs to the TtcA family. In terms of assembly, homodimer. Mg(2+) is required as a cofactor. It depends on [4Fe-4S] cluster as a cofactor.

It is found in the cytoplasm. The catalysed reaction is cytidine(32) in tRNA + S-sulfanyl-L-cysteinyl-[cysteine desulfurase] + AH2 + ATP = 2-thiocytidine(32) in tRNA + L-cysteinyl-[cysteine desulfurase] + A + AMP + diphosphate + H(+). It participates in tRNA modification. In terms of biological role, catalyzes the ATP-dependent 2-thiolation of cytidine in position 32 of tRNA, to form 2-thiocytidine (s(2)C32). The sulfur atoms are provided by the cysteine/cysteine desulfurase (IscS) system. The protein is tRNA-cytidine(32) 2-sulfurtransferase of Shewanella sediminis (strain HAW-EB3).